Reading from the N-terminus, the 225-residue chain is Paired immunoglobulin-like type 2 receptor beta-2 (225 aa).

Residues methionine 1–serine 31 form the signal peptide. Residues alanine 32 to methionine 195 are Extracellular-facing. N-linked (GlcNAc...) asparagine glycosylation is found at asparagine 90, asparagine 107, and asparagine 160. A helical membrane pass occupies residues valine 196–leucine 216. The Cytoplasmic portion of the chain corresponds to arginine 217–alanine 225.

The protein resides in the membrane. Functionally, paired receptors consist of highly related activating and inhibitory receptors and are widely involved in the regulation of the immune system. PILRB2 is probably a cellular signaling activating receptor that associates with ITAM-bearing adapter molecules on the cell surface. The protein is Paired immunoglobulin-like type 2 receptor beta-2 (Pilrb2) of Mus musculus (Mouse).